The sequence spans 326 residues: mRNA decay activator protein ZFP36 (326 aa).

The tract at residues 1-15 (MDLTAIYESLLSLSP) is necessary for nuclear export. The interval 1-100 (MDLTAIYESL…PTSPTATSTT (100 aa)) is necessary and sufficient for the association with mRNA decay enzymes and mRNA decay activation. Necessary for localization of ARE-containing mRNAs to processing bodies (PBs) stretches follow at residues 1 to 174 (MDLT…DLAA) and 100 to 326 (TPSR…SVSE). Residues 13 to 66 (LSPDVPVPSDHGGTESSPGWGSSGPWSLSPSDSSPSGVTSRLPGRSTSLVEGRS) are disordered. A compositionally biased stretch (low complexity) spans 28–49 (SSPGWGSSGPWSLSPSDSSPSG). The residue at position 60 (serine 60) is a Phosphoserine; by MAPKAPK2. Serine 66 carries the post-translational modification Phosphoserine. The stretch at 71 to 75 (PPPPG) is one P-P-P-P-G repeat. Positions 78–102 (PLAPRLGPELSPSPTSPTATSTTPS) are disordered. Residues serine 88 and serine 90 each carry the phosphoserine modification. A Phosphothreonine modification is found at threonine 92. Serine 93 bears the Phosphoserine mark. A necessary for nuclear localization region spans residues 95–168 (TATSTTPSRY…GSRCHFIHNP (74 aa)). The necessary for RNA-binding stretch occupies residues 97–173 (TSTTPSRYKT…FIHNPSEDLA (77 aa)). 2 consecutive C3H1-type zinc fingers follow at residues 103-131 (RYKT…HGLG) and 141-169 (KYKT…HNPS). The segment at 103–194 (RYKTELCRTF…ISFSGLPSGR (92 aa)) is necessary for interaction with PABPN1. Serine 169 is modified (phosphoserine). The necessary for mRNA decay activation stretch occupies residues 174 to 326 (APGHPPVLRQ…PIFNRISVSE (153 aa)). Disordered stretches follow at residues 175–245 (PGHP…RRDP) and 273–292 (SVQS…SSLG). Serine 186 carries the post-translational modification Phosphoserine; by MAPKAPK2. Position 197 is a phosphoserine (serine 197). The stretch at 198-202 (PPPPG) is one P-P-P-P-G repeat. Over residues 204 to 216 (AGPSLSSSSFSPS) the composition is skewed to low complexity. A Phosphoserine modification is found at serine 218. A P-P-P-P-G repeat occupies 219-223 (PPPPG). Position 228 is a phosphoserine; by MAPK1; in vitro (serine 228). Serine 276, serine 296, and serine 323 each carry phosphoserine. The tract at residues 312 to 326 (APRRLPIFNRISVSE) is interaction with CNOT1.

In terms of assembly, associates with cytoplasmic CCR4-NOT and PAN2-PAN3 deadenylase complexes to trigger ARE-containing mRNA deadenylation and decay processes. Part of a mRNA decay activation complex at least composed of poly(A)-specific exoribonucleases CNOT6, EXOSC2 and XRN1 and mRNA-decapping enzymes DCP1A and DCP2. Associates with the RNA exosome complex. Interacts (via phosphorylated form) with 14-3-3 proteins; these interactions promote exclusion of ZFP36 from cytoplasmic stress granules in response to arsenite treatment in a MAPKAPK2-dependent manner and does not prevent CCR4-NOT deadenylase complex recruitment or ZFP36-induced ARE-containing mRNA deadenylation and decay processes. Interacts with 14-3-3 proteins; these interactions occur in response to rapamycin in an Akt-dependent manner. Interacts with AGO2 and AGO4. Interacts (via C-terminus) with CNOT1; this interaction occurs in a RNA-independent manner and induces mRNA deadenylation. Interacts (via N-terminus) with CNOT6. Interacts with CNOT6L. Interacts (via C-terminus) with CNOT7; this interaction occurs in a RNA-independent manner, induces mRNA deadenylation and is inhibited in a phosphorylation MAPKAPK2-dependent manner. Interacts (via unphosphorylated form) with CNOT8; this interaction occurs in a RNA-independent manner and is inhibited in a phosphorylation MAPKAPK2-dependent manner. Interacts with DCP1A. Interacts (via N-terminus) with DCP2. Interacts with EDC3. Interacts (via N-terminus) with EXOSC2. Interacts with heat shock 70 kDa proteins. Interacts with KHSRP; this interaction increases upon cytokine-induced treatment. Interacts with MAP3K4; this interaction enhances the association with SH3KBP1/CIN85. Interacts with MAPKAPK2; this interaction occurs upon skeletal muscle satellite cell activation. Interacts with NCL. Interacts with NUP214; this interaction increases upon lipopolysaccharide (LPS) stimulation. Interacts with PABPC1; this interaction occurs in a RNA-dependent manner. Interacts (via hypophosphorylated form) with PABPN1 (via RRM domain and C-terminal arginine-rich region); this interaction occurs in the nucleus in a RNA-independent manner, decreases in presence of single-stranded poly(A) RNA-oligomer and in a p38 MAPK-dependent-manner and inhibits nuclear poly(A) tail synthesis. Interacts with PAN2. Interacts (via C3H1-type zinc finger domains) with PKM. Interacts (via C3H1-type zinc finger domains) with nuclear RNA poly(A) polymerase. Interacts with PPP2CA; this interaction occurs in LPS-stimulated cells and induces ZFP36 dephosphorylation, and hence may promote ARE-containing mRNAs decay. Interacts (via C-terminus) with PRR5L (via C-terminus); this interaction may accelerate ZFP36-mediated mRNA decay during stress. Interacts (via C-terminus) with SFN; this interaction occurs in a phosphorylation-dependent manner. Interacts (via extreme C-terminal region) with SH3KBP1/CIN85 (via SH3 domains); this interaction enhances MAP3K4-induced phosphorylation of ZFP36 at Ser-66 and Ser-93 and does not alter neither ZFP36 binding to ARE-containing transcripts nor TNF-alpha mRNA decay. Interacts with XRN1. Interacts (via C-terminus and Ser-186 phosphorylated form) with YWHAB; this interaction occurs in a p38/MAPKAPK2-dependent manner, increases cytoplasmic localization of ZFP36 and protects ZFP36 from Ser-186 dephosphorylation by serine/threonine phosphatase 2A, and hence may be crucial for stabilizing ARE-containing mRNAs. Interacts (via phosphorylated form) with YWHAE. Interacts (via C-terminus) with YWHAG; this interaction occurs in a phosphorylation-dependent manner. Interacts with YWHAH; this interaction occurs in a phosphorylation-dependent manner. Interacts with YWHAQ; this interaction occurs in a phosphorylation-dependent manner. Interacts with (via C-terminus) YWHAZ; this interaction occurs in a phosphorylation-dependent manner. Interacts (via P-P-P-P-G repeats) with GIGYF2; the interaction is direct. (Microbial infection) Interacts (via C-terminus) with HTLV-1 TAX (via C-terminus); this interaction inhibits HTLV-1 TAX to transactivate viral long terminal repeat (LTR) promoter. Phosphorylated. Phosphorylation at serine and/or threonine residues occurs in a p38 MAPK- and MAPKAPK2-dependent manner. Phosphorylated by MAPKAPK2 at Ser-60 and Ser-186; phosphorylation increases its stability and cytoplasmic localization, promotes binding to 14-3-3 adapter proteins and inhibits the recruitment of cytoplasmic CCR4-NOT and PAN2-PAN3 deadenylase complexes to the mRNA decay machinery, thereby inhibiting ZFP36-induced ARE-containing mRNA deadenylation and decay processes. Phosphorylation by MAPKAPK2 does not impair ARE-containing RNA-binding. Phosphorylated in a MAPKAPK2- and p38 MAPK-dependent manner upon skeletal muscle satellite cell activation; this phosphorylation inhibits ZFP36-mediated mRNA decay activity, and hence stabilizes MYOD1 mRNA. Phosphorylated by MAPK1 upon mitogen stimulation. Phosphorylated at Ser-66 and Ser-93; these phosphorylations increase in a SH3KBP1-dependent manner. Phosphorylated at serine and threonine residues in a pyruvate kinase PKM- and p38 MAPK-dependent manner. Phosphorylation at Ser-60 may participate in the PKM-mediated degradation of ZFP36 in a p38 MAPK-dependent manner. Dephosphorylated by serine/threonine phosphatase 2A at Ser-186. In terms of processing, ubiquitinated; pyruvate kinase (PKM)-dependent ubiquitination leads to proteasomal degradation through a p38 MAPK signaling pathway. In terms of tissue distribution, expressed in both basal and suprabasal epidermal layers. Expressed in epidermal keratinocytes. Expressed strongly in mature dendritic cells. Expressed in immature dendritic cells (at protein level).

It localises to the nucleus. It is found in the cytoplasm. The protein resides in the cytoplasmic granule. Its subcellular location is the P-body. Its function is as follows. Zinc-finger RNA-binding protein that destabilizes several cytoplasmic AU-rich element (ARE)-containing mRNA transcripts by promoting their poly(A) tail removal or deadenylation, and hence provide a mechanism for attenuating protein synthesis. Acts as an 3'-untranslated region (UTR) ARE mRNA-binding adapter protein to communicate signaling events to the mRNA decay machinery. Recruits deadenylase CNOT7 (and probably the CCR4-NOT complex) via association with CNOT1, and hence promotes ARE-mediated mRNA deadenylation. Functions also by recruiting components of the cytoplasmic RNA decay machinery to the bound ARE-containing mRNAs. Self regulates by destabilizing its own mRNA. Binds to 3'-UTR ARE of numerous mRNAs and of its own mRNA. Plays a role in anti-inflammatory responses; suppresses tumor necrosis factor (TNF)-alpha production by stimulating ARE-mediated TNF-alpha mRNA decay and several other inflammatory ARE-containing mRNAs in interferon (IFN)- and/or lipopolysaccharide (LPS)-induced macrophages. Also plays a role in the regulation of dendritic cell maturation at the post-transcriptional level, and hence operates as part of a negative feedback loop to limit the inflammatory response. Promotes ARE-mediated mRNA decay of hypoxia-inducible factor HIF1A mRNA during the response of endothelial cells to hypoxia. Positively regulates early adipogenesis of preadipocytes by promoting ARE-mediated mRNA decay of immediate early genes (IEGs). Negatively regulates hematopoietic/erythroid cell differentiation by promoting ARE-mediated mRNA decay of the transcription factor STAT5B mRNA. Plays a role in maintaining skeletal muscle satellite cell quiescence by promoting ARE-mediated mRNA decay of the myogenic determination factor MYOD1 mRNA. Associates also with and regulates the expression of non-ARE-containing target mRNAs at the post-transcriptional level, such as MHC class I mRNAs. Participates in association with argonaute RISC catalytic components in the ARE-mediated mRNA decay mechanism; assists microRNA (miRNA) targeting ARE-containing mRNAs. May also play a role in the regulation of cytoplasmic mRNA decapping; enhances decapping of ARE-containing RNAs, in vitro. Involved in the delivery of target ARE-mRNAs to processing bodies (PBs). In addition to its cytosolic mRNA-decay function, affects nuclear pre-mRNA processing. Negatively regulates nuclear poly(A)-binding protein PABPN1-stimulated polyadenylation activity on ARE-containing pre-mRNA during LPS-stimulated macrophages. Also involved in the regulation of stress granule (SG) and P-body (PB) formation and fusion. Plays a role in the regulation of keratinocyte proliferation, differentiation and apoptosis. Plays a role as a tumor suppressor by inhibiting cell proliferation in breast cancer cells. Functionally, (Microbial infection) Negatively regulates HTLV-1 TAX-dependent transactivation of viral long terminal repeat (LTR) promoter. This is mRNA decay activator protein ZFP36 from Homo sapiens (Human).